We begin with the raw amino-acid sequence, 268 residues long: Acidic leucine-rich nuclear phosphoprotein 32 family member E (268 aa).

Position 1 is an N-acetylmethionine (Met-1). LRR repeat units follow at residues 18–38 (EVTE…EGLN), 43–64 (ELEF…PSLN), 65–87 (KLRK…AEKC), and 89–110 (NLTY…EALQ). Lys-68 is covalently cross-linked (Glycyl lysine isopeptide (Lys-Gly) (interchain with G-Cter in SUMO2)). In terms of domain architecture, LRRCT spans 123–161 (CEITNLEDYRESIFELLQQITYLDGFDQEDNEAPDSEEE). 2 stretches are compositionally biased toward acidic residues: residues 149-216 (DQED…EEEV) and 226-247 (IQDE…EEEE). The disordered stretch occupies residues 149 to 268 (DQEDNEAPDS…AEDDGEEEDD (120 aa)). The segment at 215-268 (EVGLSYLMKEEIQDEEDDDDYVEEGEEEEEEEEGGLRGEKRKRDAEDDGEEEDD) is ZID domain. Basic and acidic residues predominate over residues 248 to 259 (GGLRGEKRKRDA).

The protein belongs to the ANP32 family. Interacts with the importin alpha KPNA1 and KPNA2. Component of a SWR1-like complex, composed of EP400, KAT5/TIP60, TRRAP, BRD8, RUVBL1, RUVBL2, ING3 and ANP32E; the complex does not contain SRCAP. Interacts with H2A.Z/H2AZ1. Post-translationally, phosphorylated. The phosphorylation is nuclear localization signal (NLS)-dependent. Expressed in peripheral blood leukocytes, colon, small intestine, prostate, thymus, spleen, skeletal muscle, liver and kidney.

The protein localises to the cytoplasm. The protein resides in the nucleus. Its function is as follows. Histone chaperone that specifically mediates the genome-wide removal of histone H2A.Z/H2AZ1 from the nucleosome: removes H2A.Z/H2AZ1 from its normal sites of deposition, especially from enhancer and insulator regions. Not involved in deposition of H2A.Z/H2AZ1 in the nucleosome. May stabilize the evicted H2A.Z/H2AZ1-H2B dimer, thus shifting the equilibrium towards dissociation and the off-chromatin state. Inhibits activity of protein phosphatase 2A (PP2A). Does not inhibit protein phosphatase 1. May play a role in cerebellar development and synaptogenesis. The chain is Acidic leucine-rich nuclear phosphoprotein 32 family member E (ANP32E) from Homo sapiens (Human).